Consider the following 237-residue polypeptide: Cyclic-di-GMP-binding biofilm dispersal mediator protein (237 aa).

Position 10 to 34 (10 to 34 (LILGGSRGIGAAIVRRFVTDGANVR)) interacts with NAD(+). S132 is a substrate binding site. Catalysis depends on Y146, which acts as the Proton acceptor.

The protein belongs to the short-chain dehydrogenases/reductases (SDR) family.

Functionally, increases biofilm dispersal. Acts by binding directly to the signaling molecule cyclic-di-GMP, which decreases the intracellular concentration of cyclic-di-GMP and leads to biofilm dispersal. Also controls other biofilm-related phenotypes such as cell motility, cell size, cell aggregation and production of extracellular DNA and extracellular polysaccharides (EPS). Does not act as a phosphodiesterase. The polypeptide is Cyclic-di-GMP-binding biofilm dispersal mediator protein (bdcA) (Escherichia coli (strain K12)).